The following is a 1164-amino-acid chain: IgA FC receptor (1164 aa).

The signal sequence occupies residues 1–37; sequence MFKSNYERKMRYSIRKFSVGVASVAVASLFMGSVAHA. Disordered stretches follow at residues 54–75 and 167–220; these read KPYP…ELET and HEEV…EDKD. Polar residues predominate over residues 59-73; sequence MAQTDQGNNSSSSEL. 2 stretches are compositionally biased toward basic and acidic residues: residues 167–176 and 183–220; these read HEEVEKDKKA and KQSD…EDKD. IgA-binding regions lie at residues 199 to 438 and 439 to 826; these read NHQK…KIEL and TVSP…ETNT. The 101-residue stretch at 434–534 folds into the Ig-like domain; sequence QKIELTVSPE…VEKTFTITVQ (101 aa). Residues 536–564 show a composition bias toward basic and acidic residues; the sequence is KEEKQVPKTPEQKDSKTEEKVPQEPKSND. 2 disordered regions span residues 536–567 and 823–947; these read KEEK…DKNQ and ETNT…PDGL. Residues 911–920 show a composition bias toward pro residues; that stretch reads PKIPEPPKTP. Positions 1132–1136 match the LPXTG sorting signal motif; sequence LPYTG. Pentaglycyl murein peptidoglycan amidated threonine is present on Thr-1135. Residues 1136–1164 constitute a propeptide, removed by sortase; it reads GVASNLVLEIMGLLGLIGTSFIAMKRRKS.

It is found in the secreted. The protein localises to the cell wall. The chain is IgA FC receptor (bag) from Streptococcus agalactiae.